A 583-amino-acid chain; its full sequence is Zinc finger protein 277 (583 aa).

2 consecutive C2H2-type zinc fingers follow at residues 351–375 (LQCL…KKQH) and 482–508 (HQCK…DTKH).

Belongs to the ZNF277 family. In terms of assembly, interacts (via zinc-finger domains) with RPS2/40S ribosomal protein S2, perhaps as nascent RPS2 is synthesized during translation; the interaction is direct; the interaction is extra-ribosomal. Interaction with RPS2 competes with the binding of RPS2 to protein arginine methyltransferase PRMT3. Interacts with Polycomb group (PcG) complex protein BMI1. May be part of a complex including at least ZNF277, BMI1 and RNF2/RING2.

The protein resides in the nucleus. The protein localises to the cytoplasm. Its subcellular location is the nucleolus. It localises to the chromosome. Functionally, probable transcription factor. Involved in modulation of cellular senescence; represses transcription of the tumor suppressor gene INK4A/ARF, perhaps acting via the Polycomb group (PcG) complex PRC1. The sequence is that of Zinc finger protein 277 from Mus musculus (Mouse).